The sequence spans 423 residues: UPF0229 protein Psyr_4632 (423 aa).

The interval 65-110 (HHGRGGKQTVVHPGNKEFTTGEHIARPQGGGGGKGPGKAGNSGEGM) is disordered. A compositionally biased stretch (gly residues) spans 92–107 (QGGGGGKGPGKAGNSG).

This sequence belongs to the UPF0229 family.

The protein is UPF0229 protein Psyr_4632 of Pseudomonas syringae pv. syringae (strain B728a).